Reading from the N-terminus, the 358-residue chain is DnaJ homolog subfamily B member 11 (358 aa).

A signal peptide spans 1-22; the sequence is MAPQNLSTFCLLLLYLIGAVIA. Residues 25 to 90 form the J domain; sequence DFYKILGVPR…EKRKQYDTYG (66 aa). Threonine 188 bears the Phosphothreonine mark. Asparagine 261 carries an N-linked (GlcNAc...) asparagine glycan.

As to quaternary structure, part of a large chaperone multiprotein complex comprising DNAJB11, HSP90B1, HSPA5, HYOU, PDIA2, PDIA4, PDIA6, PPIB, SDF2L1, UGGT1 and very small amounts of ERP29, but not, or at very low levels, CALR nor CANX. Binds to denatured substrates in an ATP-independent manner. Interacts via the J domain with HSPA5 in an ATP-dependent manner. In terms of processing, contains high-mannose Endo H-sensitive carbohydrates. Cys-169, Cys-171, Cys-193 and Cys-196 form intramolecular disulfide bonds. The preferential partner for each Cys is not known.

The protein localises to the endoplasmic reticulum lumen. As a co-chaperone for HSPA5 it is required for proper folding, trafficking or degradation of proteins. Binds directly to both unfolded proteins that are substrates for ERAD and nascent unfolded peptide chains, but dissociates from the HSPA5-unfolded protein complex before folding is completed. May help recruiting HSPA5 and other chaperones to the substrate. Stimulates HSPA5 ATPase activity. It is necessary for maturation and correct trafficking of PKD1. In Rattus norvegicus (Rat), this protein is DnaJ homolog subfamily B member 11 (Dnajb11).